The following is a 277-amino-acid chain: Proteasome assembly chaperone 1 (277 aa).

It belongs to the PSMG1 family. In terms of assembly, forms a heterodimer with psmg2. In terms of processing, degraded by the proteasome upon completion of 20S proteasome maturation.

Its subcellular location is the cytoplasm. The protein localises to the endoplasmic reticulum. Functionally, chaperone protein which promotes assembly of the 20S proteasome as part of a heterodimer with psmg2. This is Proteasome assembly chaperone 1 from Danio rerio (Zebrafish).